Consider the following 512-residue polypeptide: Glutathione-binding protein GsiB (512 aa).

An N-terminal signal peptide occupies residues 1–26 (MARAVHRSGLVALGIATALMASCAFA).

This sequence belongs to the bacterial solute-binding protein 5 family. In terms of assembly, the complex is composed of two ATP-binding proteins (GsiA), two transmembrane proteins (GsiC and GsiD) and a solute-binding protein (GsiB).

It localises to the periplasm. Part of the ABC transporter complex GsiABCD involved in glutathione import. Binds glutathione. The protein is Glutathione-binding protein GsiB of Shigella flexneri.